The following is a 171-amino-acid chain: MDYFTLFGLPARYQIDTQALSFRFQDLQRQYHPDKFANGTQAQQLAAVQQSATINQAWQTLRHPLTRAEYLLSLHGFDLASEQHTVRDTAFLMEQLTLREELDDIEQSKDDARLESFIKRVQKMFDARLQQMVEQLDNAAWDAAADTVRKLRFLDKLRSSAEQLEEKLLDF.

Residues 2–74 (DYFTLFGLPA…LTRAEYLLSL (73 aa)) form the J domain.

Belongs to the HscB family. Interacts with HscA and stimulates its ATPase activity. Interacts with IscU.

Functionally, co-chaperone involved in the maturation of iron-sulfur cluster-containing proteins. Seems to help targeting proteins to be folded toward HscA. The polypeptide is Co-chaperone protein HscB (Salmonella paratyphi A (strain AKU_12601)).